The following is a 176-amino-acid chain: Tumor necrosis factor receptor superfamily member 23 (176 aa).

The N-terminal stretch at 1–29 (MVTFSHVSSLSHWFLLLLLLNLFLPVIFA) is a signal peptide. 3 TNFR-Cys repeats span residues 37–72 (NCPD…QGQC), 74–114 (KCHP…DRKC), and 115–155 (ECQI…NTVC). Disulfide bonds link C38/C49, C50/C63, C53/C72, C75/C90, C93/C106, C96/C114, C116/C131, C134/C147, and C137/C155. N-linked (GlcNAc...) asparagine glycosylation is present at N148. The GPI-anchor amidated cysteine moiety is linked to residue C155. Positions 156-176 (SSSVSNPRNWLFLLMLIVFCI) are cleaved as a propeptide — removed in mature form.

Ubiquitous.

It is found in the cell membrane. Receptor for the cytotoxic ligand TRAIL. Lacks a cytoplasmic death domain and hence is not capable of inducing apoptosis. May protect cells against TRAIL mediated apoptosis through ligand competition. Cannot induce the NF-kappa-B pathway. This chain is Tumor necrosis factor receptor superfamily member 23 (Tnfrsf23), found in Mus musculus (Mouse).